The following is a 182-amino-acid chain: Large ribosomal subunit protein uL16 (182 aa).

It belongs to the universal ribosomal protein uL16 family.

In Pyrobaculum arsenaticum (strain DSM 13514 / JCM 11321 / PZ6), this protein is Large ribosomal subunit protein uL16.